Reading from the N-terminus, the 33-residue chain is Dermaseptin-H8 (33 aa).

Leu33 carries the post-translational modification Leucine amide.

As to expression, expressed by the skin glands.

The protein localises to the secreted. Functionally, has antimicrobial activity. The sequence is that of Dermaseptin-H8 from Pithecopus hypochondrialis (Orange-legged leaf frog).